A 442-amino-acid chain; its full sequence is tRNA modification GTPase MnmE (442 aa).

(6S)-5-formyl-5,6,7,8-tetrahydrofolate is bound by residues R21, E79, and K118. One can recognise a TrmE-type G domain in the interval 214 to 367; it reads GFKIAIIGKP…LKEELQNYLN (154 aa). N224 contacts K(+). GTP contacts are provided by residues 224-229, 243-249, and 268-271; these read NVGKSS, SDIAGTT, and DTAG. S228 is a binding site for Mg(2+). K(+) contacts are provided by S243, I245, and T248. T249 is a binding site for Mg(2+). K442 is a binding site for (6S)-5-formyl-5,6,7,8-tetrahydrofolate.

Belongs to the TRAFAC class TrmE-Era-EngA-EngB-Septin-like GTPase superfamily. TrmE GTPase family. In terms of assembly, homodimer. Heterotetramer of two MnmE and two MnmG subunits. It depends on K(+) as a cofactor.

The protein resides in the cytoplasm. Exhibits a very high intrinsic GTPase hydrolysis rate. Involved in the addition of a carboxymethylaminomethyl (cmnm) group at the wobble position (U34) of certain tRNAs, forming tRNA-cmnm(5)s(2)U34. This is tRNA modification GTPase MnmE from Campylobacter jejuni subsp. doylei (strain ATCC BAA-1458 / RM4099 / 269.97).